The primary structure comprises 158 residues: MSKTPSYEDATACQAALFEWAESYDLKDWNRLSKCIAPTLQIDYRAVFGQFWEAMPADEFVGMISSPGFLGNPLIKTQHFVGMTRWTQTSEDSVTGRHQMRVAHQKYADAQMKEVVLKGHGHGGATTWFRKVDGDWKFAGIEPEIRWAEFDLDKIFAE.

2 residues coordinate substrate: Tyr-24 and Tyr-44. Residues His-79 and His-104 contribute to the active site.

It belongs to the scytalone dehydratase family.

Its pathway is pigment biosynthesis. In terms of biological role, scytalone dehydratase-like protein; part of the ergochrome gene cluster responsible for the typical purple-black color of the ergot sclerotia. The ergochrome gene cluster produces several ergot pigments including the yellow ergochrome secalonic acid and its derivatives, as well as the red anthraquinones endocrocin and clavorubin. The pathway begins with the synthesis of atrochrysone thioester by the polyketide synthase (PKS) CPUR_05437. The atrochrysone carboxyl ACP thioesterase CPUR_05436 then breaks the thioester bond and releases the atrochrysone carboxylic acid from CPUR_05437. The atrochrysone carboxylic acid is then converted to atrochrysone which is further transformed into emodin anthrone. The next step is performed by the anthrone oxygenase CPUR_05434 that catalyzes the oxidation of emodinanthrone to emodin. Emodin is further modified to yield monodictyphenone via several steps involving CPUR_05427, CPUR_05428, CPUR_05429 and CPUR_05430. The short chain dehydrogenase/reductase CPUR_05418 then catalyzes the C-5 ketoreduction to give the xanthone skeleton of the monomeric units. Ergochromes formation requires further dimerization steps of different xanthone units, probably catalyzed by the cytochrome P450 monooxygenase CPUR_05419. CPUR_05425, CPUR_05426 and CPUR_05431 are unique to Claviceps, thus it is likely that they are involved in further modification of xanthone units or in their dimerization. The yellow ergochromes and the red anthraquinone pigments endocrocin and clavorubin are products from the same PKS derived precursors and the latter are likely shunt products in the pathway of xanthone biosynthesis. It is proposed that atrochrysone carboxylic acid released from the PKS CPUR_05437 can also be converted to endocrocin anthrone which is further oxidized into endocrocin by CPUR_05435. Endocrocin could be then modified to clavorubin, possibly by CPUR_05423 and CPUR_05431. Clavorubin is the principal anthraquinone metabolite produced by the cluster with a much higher yield compared to endocrocin. This chain is Scytalone dehydratase-like protein CPUR_05428, found in Claviceps purpurea (strain 20.1) (Ergot fungus).